Consider the following 452-residue polypeptide: Heat shock protein 83 (452 aa).

Arg124 is an ATP binding site. Positions 448 to 452 (MEQVD) match the TPR repeat-binding motif.

This sequence belongs to the heat shock protein 90 family. As to quaternary structure, homodimer.

It localises to the cytoplasm. Functionally, molecular chaperone that promotes the maturation, structural maintenance and proper regulation of specific target proteins involved for instance in cell cycle control and signal transduction. Undergoes a functional cycle that is linked to its ATPase activity. This cycle probably induces conformational changes in the client proteins, thereby causing their activation. Interacts dynamically with various co-chaperones that modulate its substrate recognition, ATPase cycle and chaperone function. In Leishmania donovani, this protein is Heat shock protein 83 (HSP83).